A 445-amino-acid chain; its full sequence is Enolase 2 (445 aa).

Residues His164 and Glu173 each contribute to the substrate site. Glu216 functions as the Proton donor in the catalytic mechanism. The Mg(2+) site is built by Asp251, Glu301, and Asp328. Glu301 and Asp328 together coordinate substrate. Lys353 acts as the Proton acceptor in catalysis. Substrate is bound by residues 380-383 (SHRS) and Lys404.

Belongs to the enolase family. In terms of assembly, homodimer. The cofactor is Mg(2+).

The protein resides in the cytoplasm. It catalyses the reaction (2R)-2-phosphoglycerate = phosphoenolpyruvate + H2O. It functions in the pathway carbohydrate degradation; glycolysis; pyruvate from D-glyceraldehyde 3-phosphate: step 4/5. This is Enolase 2 (ENO2) from Hevea brasiliensis (Para rubber tree).